The following is a 332-amino-acid chain: Tetraacyldisaccharide 4'-kinase (332 aa).

Residue 58 to 65 (TVGGSGKT) participates in ATP binding.

This sequence belongs to the LpxK family.

It carries out the reaction a lipid A disaccharide + ATP = a lipid IVA + ADP + H(+). Its pathway is glycolipid biosynthesis; lipid IV(A) biosynthesis; lipid IV(A) from (3R)-3-hydroxytetradecanoyl-[acyl-carrier-protein] and UDP-N-acetyl-alpha-D-glucosamine: step 6/6. Transfers the gamma-phosphate of ATP to the 4'-position of a tetraacyldisaccharide 1-phosphate intermediate (termed DS-1-P) to form tetraacyldisaccharide 1,4'-bis-phosphate (lipid IVA). In Shewanella piezotolerans (strain WP3 / JCM 13877), this protein is Tetraacyldisaccharide 4'-kinase.